Here is a 156-residue protein sequence, read N- to C-terminus: Lipoprotein signal peptidase (156 aa).

3 helical membrane-spanning segments follow: residues F5–V25, Y64–L84, and I89–G109. Residues D113 and D130 contribute to the active site. A helical membrane pass occupies residues N122–I142.

The protein belongs to the peptidase A8 family.

Its subcellular location is the cell inner membrane. The catalysed reaction is Release of signal peptides from bacterial membrane prolipoproteins. Hydrolyzes -Xaa-Yaa-Zaa-|-(S,diacylglyceryl)Cys-, in which Xaa is hydrophobic (preferably Leu), and Yaa (Ala or Ser) and Zaa (Gly or Ala) have small, neutral side chains.. It participates in protein modification; lipoprotein biosynthesis (signal peptide cleavage). Its function is as follows. This protein specifically catalyzes the removal of signal peptides from prolipoproteins. The sequence is that of Lipoprotein signal peptidase from Campylobacter jejuni subsp. jejuni serotype O:2 (strain ATCC 700819 / NCTC 11168).